Reading from the N-terminus, the 135-residue chain is uncharacterized protein (135 aa).

Helical transmembrane passes span 13 to 35 (AKVI…AMYL), 82 to 101 (VAVF…LLSI), and 108 to 130 (IYRI…PLIL).

Its subcellular location is the cell membrane. This is an uncharacterized protein from Archaeoglobus fulgidus (strain ATCC 49558 / DSM 4304 / JCM 9628 / NBRC 100126 / VC-16).